A 224-amino-acid chain; its full sequence is Ribonuclease T (224 aa).

The Exonuclease domain maps to 20–194 (VVIDVETAGF…YDTERTAELF (175 aa)). Positions 23, 25, 181, and 186 each coordinate Mg(2+). The active-site Proton donor/acceptor is H181.

It belongs to the RNase T family. As to quaternary structure, homodimer. Mg(2+) is required as a cofactor.

Trims short 3' overhangs of a variety of RNA species, leaving a one or two nucleotide 3' overhang. Responsible for the end-turnover of tRNA: specifically removes the terminal AMP residue from uncharged tRNA (tRNA-C-C-A). Also appears to be involved in tRNA biosynthesis. The protein is Ribonuclease T of Shewanella putrefaciens (strain CN-32 / ATCC BAA-453).